The sequence spans 472 residues: Ribosomal protein uS12 methylthiotransferase RimO (472 aa).

The MTTase N-terminal domain maps to 33-143 (NRIGFVSLGC…VLKHVHKYVP (111 aa)). Positions 42, 78, 107, 175, 179, and 182 each coordinate [4Fe-4S] cluster. One can recognise a Radical SAM core domain in the interval 161 to 398 (LTPKHYAYLK…MEVQAEISAE (238 aa)). The TRAM domain maps to 401–467 (ARFVGRTLDI…EHDLWAEVVD (67 aa)).

It belongs to the methylthiotransferase family. RimO subfamily. [4Fe-4S] cluster is required as a cofactor.

The protein localises to the cytoplasm. It carries out the reaction L-aspartate(89)-[ribosomal protein uS12]-hydrogen + (sulfur carrier)-SH + AH2 + 2 S-adenosyl-L-methionine = 3-methylsulfanyl-L-aspartate(89)-[ribosomal protein uS12]-hydrogen + (sulfur carrier)-H + 5'-deoxyadenosine + L-methionine + A + S-adenosyl-L-homocysteine + 2 H(+). In terms of biological role, catalyzes the methylthiolation of an aspartic acid residue of ribosomal protein uS12. The sequence is that of Ribosomal protein uS12 methylthiotransferase RimO from Shewanella baltica (strain OS155 / ATCC BAA-1091).